A 296-amino-acid chain; its full sequence is Formylmethanofuran--tetrahydromethanopterin formyltransferase (296 aa).

The protein belongs to the FTR family. Homotetramer composed of two dimers. Dimerization is sufficient for enzyme activity, but tetramerization is required for high thermostability.

It localises to the cytoplasm. The catalysed reaction is N-formylmethanofuran + 5,6,7,8-tetrahydromethanopterin + H(+) = N(5)-formyl-5,6,7,8-tetrahydromethanopterin + methanofuran. It functions in the pathway one-carbon metabolism; methanogenesis from CO(2); 5,10-methenyl-5,6,7,8-tetrahydromethanopterin from CO(2): step 2/3. Requires high salt concentrations for activity and thermostability; 1.5-1.8 M KH(2)PO(4) stimulates activity while stabilizing the enzyme. Its function is as follows. Catalyzes the reversible transfer of a formyl group from formylmethanofuran (formyl-MFR) to tetrahydromethanopterin (H(4)MPT) to produce 5-formyl tetrahydromethanopterin (5-formyl-H(4)MPT) and methanofuran (MFR). Acts via a ternary-complex mechanism. Uses N-furfurylformamide much less efficiently, does not use N-methylformamide or formamide. Protein overexpressed in E.coli has very similar properties to enzyme purified from M.kandleri. The polypeptide is Formylmethanofuran--tetrahydromethanopterin formyltransferase (Methanopyrus kandleri (strain AV19 / DSM 6324 / JCM 9639 / NBRC 100938)).